The primary structure comprises 515 residues: Monocarboxylate transporter 10 (515 aa).

The interval 1-48 (MVLSQEEPDSARGTSEAQPLGPAPTGAAPPPGPGPSDSPEAAVEKVEV) is disordered. The Cytoplasmic portion of the chain corresponds to 1–66 (MVLSQEEPDS…EPHEPPEPPE (66 aa)). The segment covering 17 to 26 (AQPLGPAPTG) has biased composition (low complexity). Residues 27 to 36 (AAPPPGPGPS) show a composition bias toward pro residues. The helical transmembrane segment at 67–87 (GGWGWLVMLAAMWCNGSVFGI) threads the bilayer. The Extracellular segment spans residues 88–114 (QNACGVLFVSMLETFGSKDDDKMVFKT). The chain crosses the membrane as a helical span at residues 115–135 (AWVGSLSMGMIFFCCPIVSVF). At 136–144 (TDLFGCRKT) the chain is on the cytoplasmic side. Residues 145-165 (AVVGAAVGFVGLMSSSFVSSI) form a helical membrane-spanning segment. Residues 166 to 171 (EPLYLT) are Extracellular-facing. Residues 172-192 (YGIIFACGCSFAYQPSLVILG) traverse the membrane as a helical segment. Over 193 to 200 (HYFKKRLG) the chain is Cytoplasmic. The helical transmembrane segment at 201 to 221 (LVNGIVTAGSSVFTILLPLLL) threads the bilayer. At 222–228 (RVLIDSV) the chain is on the extracellular side. Residues 229 to 249 (GLFYTLRVLCIFMFVLFLAGF) form a helical membrane-spanning segment. Over 250 to 291 (TYRPLATSTKDKESGGSGSSLFSRKKFSPPKKIFNFAIFKVT) the chain is Cytoplasmic. Phosphoserine is present on Ser-263. A helical membrane pass occupies residues 292–312 (AYAVWAVGIPLALFGYFVPYV). The Extracellular segment spans residues 313-329 (HLMKHVNERFQDEKNKE). Residues 330-350 (VVLMCIGVTSGVGRLLFGRIA) traverse the membrane as a helical segment. Asp-351 is a topological domain (cytoplasmic). Residues 352–372 (YVPGVKKVYLQVLSFFFIGLM) traverse the membrane as a helical segment. Topologically, residues 373–396 (SMMIPLCSIFGALIAVCLIMGLFD) are extracellular. A helical membrane pass occupies residues 397-417 (GCFISIMAPIAFELVGAQDVS). Topologically, residues 418–419 (QA) are cytoplasmic. The helical transmembrane segment at 420-440 (IGFLLGFMSIPMTVGPPIAGL) threads the bilayer. Topologically, residues 441 to 451 (LRDKLGSYDVA) are extracellular. Residues 452 to 472 (FYLAGVPPLIGGAVLCFIPWI) form a helical membrane-spanning segment. The Cytoplasmic portion of the chain corresponds to 473 to 515 (HSKKQREISKTTGKEKMEKMLENQNSLLSSSSGMFKKESDSII). Phosphoserine occurs at positions 498, 501, 503, and 504.

This sequence belongs to the major facilitator superfamily. Monocarboxylate porter (TC 2.A.1.13) family. Not N-glycosylated. Strongly expressed in kidney and skeletal muscle and at lower level in placenta and heart.

It is found in the cell membrane. It localises to the basolateral cell membrane. The enzyme catalyses 3,3',5-triiodo-L-thyronine(out) = 3,3',5-triiodo-L-thyronine(in). It carries out the reaction L-thyroxine(out) = L-thyroxine(in). The catalysed reaction is L-tryptophan(in) = L-tryptophan(out). It catalyses the reaction L-tyrosine(in) = L-tyrosine(out). The enzyme catalyses L-phenylalanine(in) = L-phenylalanine(out). Sodium- and proton-independent thyroid hormones and aromatic acids transporter. Mediates both uptake and efflux of 3,5,3'-triiodothyronine (T3) and 3,5,3',5'-tetraiodothyronine (T4) with high affinity, suggesting a role in the homeostasis of thyroid hormone levels. Responsible for low affinity bidirectional transport of the aromatic amino acids, such as phenylalanine, tyrosine, tryptophan and L-3,4-dihydroxyphenylalanine (L-dopa). Plays an important role in homeostasis of aromatic amino acids. The protein is Monocarboxylate transporter 10 (SLC16A10) of Homo sapiens (Human).